We begin with the raw amino-acid sequence, 928 residues long: Neuropilin-1 (928 aa).

An N-terminal signal peptide occupies residues 1–21 (MLLRLLSCCCWLLCSLRSSWA). The Extracellular portion of the chain corresponds to 22–860 (SRNDKCGDTI…PGNVLKTLDP (839 aa)). Disulfide bonds link Cys-27-Cys-54, Cys-82-Cys-104, and Cys-147-Cys-173. 2 consecutive CUB domains span residues 27–141 (CGDT…YEVF) and 147–265 (CSRN…FSVV). Asn-150 carries an N-linked (GlcNAc...) asparagine glycan. Ca(2+) is bound by residues Glu-195, Asp-209, and Asp-250. A disulfide bridge links Cys-206 with Cys-228. Asn-261, Asn-300, and Asn-523 each carry an N-linked (GlcNAc...) asparagine glycan. 2 disulfides stabilise this stretch: Cys-275-Cys-424 and Cys-431-Cys-584. F5/8 type C domains follow at residues 275–424 (CKEA…LYGC) and 431–584 (CSRM…LLGC). Ser-613 carries an O-linked (Xyl...) (chondroitin sulfate) serine; alternate glycan. The O-linked (Xyl...) (heparan sulfate) serine; alternate glycan is linked to Ser-613. Residues 624–645 (GATGQSTETPTVEASPEEPDMT) are disordered. The span at 625–635 (ATGQSTETPTV) shows a compositional bias: polar residues. Residues 646–812 (HSDLDCKFGW…NHISPSQCRA (167 aa)) form the MAM domain. Ser-834 carries O-linked (Xyl...) (chondroitin sulfate) serine glycosylation. Asn-844 carries N-linked (GlcNAc...) asparagine glycosylation. Residues 861 to 883 (ILITIIAMSALGVLLGAICGVVL) form a helical membrane-spanning segment. The Cytoplasmic portion of the chain corresponds to 884–928 (YCACWHNGMSERNLSALENYNFELVDGVKLKKDKLNTQNSYSEAS).

This sequence belongs to the neuropilin family. As to quaternary structure, homodimer, and heterodimer. Retinal ganglion cells and visual center neurons.

The protein localises to the mitochondrion membrane. Its subcellular location is the cell membrane. Its function is as follows. Receptor involved in the development of the cardiovascular system, in angiogenesis, in the formation of certain neuronal circuits and in organogenesis outside the nervous system. Mediates the chemorepulsant activity of semaphorins. Binding to VEGFA initiates a signaling pathway needed for motor neuron axon guidance and cell body migration, including for the caudal migration of facial motor neurons from rhombomere 4 to rhombomere 6 during embryonic development. Regulates mitochondrial iron transport via interaction. In Xenopus laevis (African clawed frog), this protein is Neuropilin-1 (nrp1).